A 473-amino-acid chain; its full sequence is MGIAKQSCDCCRVRRVKCDRNKPCNRCIQRNLNCTYLQPLKKRGPKSIRAGSLKKIAEVQMVSMNNNIMAAPVVCKKVPKNLIDQCLRLRLYHDNLYVIWPMLSYDDLHKLLEEKYDDRCAYWFLVSLSAATLSDLQIEIEYEEGVTFTGEQLCTLCMLSRQFFDDLSNSDIFRIMTYYCLHRCYAQFADTRTSYRLSCEAVGLIIKIAGFHREETYEFLPFGEQQLRRKVYYLLLMTERFYAVYIKCVTSLDATIAPPLPEVVTDPRLSLESFLEVIRVFTIPGKCFYDALATNCVDDSCTEDSLKRIRNELHTTSLDIEPWSYGYIDFLFSRHWVRTLAWKLVLHMKGMRMNFLSNTNNTHIPVEIARDMLGDTFLTPKNLYDVHGPGIPMKALEIANALVDVVNKYDHNMKLEAWNVLYDVSKFVFSLKHCNNKMFDRFSTKCQGALITLPISKPLQLNDNSKDEDDIIP.

A DNA-binding region (zn(2)-C6 fungal-type) is located at residues cysteine 8–cysteine 34. The Nuclear localization signal motif lies at lysine 41–arginine 49.

This sequence belongs to the MAL13 family.

It localises to the nucleus. In terms of biological role, regulates the coordinate transcription of structural MAL6S (maltase) and MAL6T (maltose permease) genes. The chain is Maltose fermentation regulatory protein MAL63 (MAL63) from Saccharomyces cerevisiae (Baker's yeast).